We begin with the raw amino-acid sequence, 265 residues long: Undecaprenyl-diphosphatase (265 aa).

The next 7 helical transmembrane spans lie at 42–62, 90–110, 115–135, 160–182, 195–215, 222–242, and 245–265; these read EAIP…IVYF, ISFL…LLLF, VEIS…VTGI, VAQG…ALLL, FLMS…MGMV, IVGL…FLKV, and KVDF…TMFL.

It belongs to the UppP family.

It localises to the cell membrane. The catalysed reaction is di-trans,octa-cis-undecaprenyl diphosphate + H2O = di-trans,octa-cis-undecaprenyl phosphate + phosphate + H(+). Catalyzes the dephosphorylation of undecaprenyl diphosphate (UPP). This is Undecaprenyl-diphosphatase from Methanococcoides burtonii (strain DSM 6242 / NBRC 107633 / OCM 468 / ACE-M).